We begin with the raw amino-acid sequence, 567 residues long: Urease subunit alpha (567 aa).

The Urease domain occupies 128–567 (GGVDTHVHYI…LPLAQRYHLF (440 aa)). His133, His135, and Lys216 together coordinate Ni(2+). Lys216 is subject to N6-carboxylysine. Substrate is bound at residue His218. The Ni(2+) site is built by His245 and His271. His319 (proton donor) is an active-site residue. Asp359 provides a ligand contact to Ni(2+).

This sequence belongs to the metallo-dependent hydrolases superfamily. Urease alpha subunit family. As to quaternary structure, heterotrimer of UreA (gamma), UreB (beta) and UreC (alpha) subunits. Three heterotrimers associate to form the active enzyme. The cofactor is Ni cation. Carboxylation allows a single lysine to coordinate two nickel ions.

Its subcellular location is the cytoplasm. The catalysed reaction is urea + 2 H2O + H(+) = hydrogencarbonate + 2 NH4(+). It functions in the pathway nitrogen metabolism; urea degradation; CO(2) and NH(3) from urea (urease route): step 1/1. The protein is Urease subunit alpha of Pseudoalteromonas translucida (strain TAC 125).